A 624-amino-acid chain; its full sequence is 1-deoxy-D-xylulose-5-phosphate synthase (624 aa).

Residues His-74 and 115 to 117 (GHS) contribute to the thiamine diphosphate site. Asp-146 contacts Mg(2+). Residues 147-148 (GA), Asn-175, Tyr-286, and Glu-366 each bind thiamine diphosphate. Mg(2+) is bound at residue Asn-175.

The protein belongs to the transketolase family. DXPS subfamily. As to quaternary structure, homodimer. The cofactor is Mg(2+). Requires thiamine diphosphate as cofactor.

It catalyses the reaction D-glyceraldehyde 3-phosphate + pyruvate + H(+) = 1-deoxy-D-xylulose 5-phosphate + CO2. It functions in the pathway metabolic intermediate biosynthesis; 1-deoxy-D-xylulose 5-phosphate biosynthesis; 1-deoxy-D-xylulose 5-phosphate from D-glyceraldehyde 3-phosphate and pyruvate: step 1/1. In terms of biological role, catalyzes the acyloin condensation reaction between C atoms 2 and 3 of pyruvate and glyceraldehyde 3-phosphate to yield 1-deoxy-D-xylulose-5-phosphate (DXP). The chain is 1-deoxy-D-xylulose-5-phosphate synthase from Clostridium kluyveri (strain NBRC 12016).